Reading from the N-terminus, the 367-residue chain is MKITAINVFQVDLPLREGRYSWSNGNFVEVFDSTVVEIETDEGLKGYAECCPLGSAYLPSYALGVRSGLQELAPHLIGKDPLNIGEINRVMDAALRGHPYAKAPIDIACWDLLGKATGQPLYTLLGGAAQDDVALYRAISQEAPEIMAKKIEGYAAEGYTKFQLKVGGDANDDINRIHATRSVLKKSDLLVADANTGWTRHEAARVVGAVSSLDVYIEQPCLTYEESVSIRRRTALPFVLDEVIDGPNTLVRGIAEDAMDCINLKISKVGGLTKAKLMRDLCIAHGIPMTIEDTWGGDIVTAAIAHLARSTPSEFTFSATDFNSYGTVDIAEGAPKRVNGRMTTSDLPGLGITPIFDVLGEPVARYS.

Catalysis depends on Lys-165, which acts as the Proton donor/acceptor. Asp-193, Glu-218, and Asp-241 together coordinate Mg(2+). Lys-265 acts as the Proton donor/acceptor in catalysis.

The protein belongs to the mandelate racemase/muconate lactonizing enzyme family. Mg(2+) is required as a cofactor.

It carries out the reaction cis-3-hydroxy-L-proline = 1-pyrroline-2-carboxylate + H2O. In terms of biological role, catalyzes the dehydration of cis-3-hydroxy-L-proline (c3LHyp) to Delta(1)-pyrroline-2-carboxylate (Pyr2C). Is likely involved in a degradation pathway that converts c3LHyp to L-proline, which allows L.aggregata to grow on c3LHyp as a sole carbon source. Also catalyzes the epimerization of c3LHyp to trans-3-hydroxy-D-proline (t3DHyp), a competing reaction occurring from the same enolate anion intermediate. L-proline, t3LHyp, t4LHyp, c4DHyp and their methylated derivatives are not substrates. In Roseibium aggregatum (strain ATCC 25650 / DSM 13394 / JCM 20685 / NBRC 16684 / NCIMB 2208 / IAM 12614 / B1) (Stappia aggregata), this protein is Cis-3-hydroxy-L-proline dehydratase.